Consider the following 879-residue polypeptide: Protein P (879 aa).

The terminal protein domain (TP) stretch occupies residues 1–184 (MHPFSRLFRN…GKPYSWEHRQ (184 aa)). The spacer stretch occupies residues 185–382 (LVQHNGQQHK…YCIHHIVSSI (198 aa)). A disordered region spans residues 304–345 (SASNSNKSRSREKAYSSNSTSKRYSPPLNYEKSDFSSPGVRG). A polymerase/reverse transcriptase domain (RT) region spans residues 383–724 (DDWGPCTVTG…YEELWPVVRQ (342 aa)). One can recognise a Reverse transcriptase domain in the interval 393–634 (DVTIKSPRTP…NHLHFMGYVI (242 aa)). Mg(2+) contacts are provided by D465, D585, and D586.

The protein belongs to the hepadnaviridae P protein family.

It catalyses the reaction DNA(n) + a 2'-deoxyribonucleoside 5'-triphosphate = DNA(n+1) + diphosphate. It carries out the reaction Endonucleolytic cleavage to 5'-phosphomonoester.. Its activity is regulated as follows. Activated by host HSP70 and HSP40 in vitro to be able to bind the epsilon loop of the pgRNA. Because deletion of the RNase H region renders the protein partly chaperone-independent, the chaperones may be needed indirectly to relieve occlusion of the RNA-binding site by this domain. Inhibited by several reverse-transcriptase inhibitors: Lamivudine, Adefovir and Entecavir. Its function is as follows. Multifunctional enzyme that converts the viral RNA genome into dsDNA in viral cytoplasmic capsids. This enzyme displays a DNA polymerase activity that can copy either DNA or RNA templates, and a ribonuclease H (RNase H) activity that cleaves the RNA strand of RNA-DNA heteroduplexes in a partially processive 3'- to 5'-endonucleasic mode. Neo-synthesized pregenomic RNA (pgRNA) are encapsidated together with the P protein, and reverse-transcribed inside the nucleocapsid. Initiation of reverse-transcription occurs first by binding the epsilon loop on the pgRNA genome, and is initiated by protein priming, thereby the 5'-end of (-)DNA is covalently linked to P protein. Partial (+)DNA is synthesized from the (-)DNA template and generates the relaxed circular DNA (RC-DNA) genome. After budding and infection, the RC-DNA migrates in the nucleus, and is converted into a plasmid-like covalently closed circular DNA (cccDNA). The activity of P protein does not seem to be necessary for cccDNA generation, and is presumably released from (+)DNA by host nuclear DNA repair machinery. This Woodchuck hepatitis B virus (isolate 1) (WHV) protein is Protein P.